The primary structure comprises 264 residues: Large ribosomal subunit protein mL50 (264 aa).

A mitochondrion-targeting transit peptide spans methionine 1–glutamine 75.

Belongs to the mitochondrion-specific ribosomal protein mL50 family. In terms of assembly, component of the mitochondrial large ribosomal subunit (mt-LSU). Mature yeast 74S mitochondrial ribosomes consist of a small (37S) and a large (54S) subunit. The 37S small subunit contains a 15S ribosomal RNA (15S mt-rRNA) and 34 different proteins. The 54S large subunit contains a 21S rRNA (21S mt-rRNA) and 46 different proteins.

The protein resides in the mitochondrion. Functionally, component of the mitochondrial ribosome (mitoribosome), a dedicated translation machinery responsible for the synthesis of mitochondrial genome-encoded proteins, including at least some of the essential transmembrane subunits of the mitochondrial respiratory chain. The mitoribosomes are attached to the mitochondrial inner membrane and translation products are cotranslationally integrated into the membrane. This Saccharomyces cerevisiae (strain ATCC 204508 / S288c) (Baker's yeast) protein is Large ribosomal subunit protein mL50 (MRPL13).